A 386-amino-acid chain; its full sequence is Branched-chain-amino-acid aminotransferase, cytosolic (386 aa).

Met-1 carries the N-acetylmethionine modification. The residue at position 222 (Lys-222) is an N6-(pyridoxal phosphate)lysine.

This sequence belongs to the class-IV pyridoxal-phosphate-dependent aminotransferase family. As to quaternary structure, homodimer. Pyridoxal 5'-phosphate serves as cofactor. Expressed in brain and kidney. Overexpressed in MYC-induced brain tumors, lymphomas, as well as in a teratocarcinoma cell line.

The protein localises to the cytoplasm. It carries out the reaction L-leucine + 2-oxoglutarate = 4-methyl-2-oxopentanoate + L-glutamate. The catalysed reaction is L-isoleucine + 2-oxoglutarate = (S)-3-methyl-2-oxopentanoate + L-glutamate. It catalyses the reaction L-valine + 2-oxoglutarate = 3-methyl-2-oxobutanoate + L-glutamate. In terms of biological role, catalyzes the first reaction in the catabolism of the essential branched chain amino acids leucine, isoleucine, and valine. The sequence is that of Branched-chain-amino-acid aminotransferase, cytosolic (Bcat1) from Mus musculus (Mouse).